Consider the following 339-residue polypeptide: Phenylalanine--tRNA ligase alpha subunit (339 aa).

Glutamate 250 is a Mg(2+) binding site.

Belongs to the class-II aminoacyl-tRNA synthetase family. Phe-tRNA synthetase alpha subunit type 1 subfamily. Tetramer of two alpha and two beta subunits. It depends on Mg(2+) as a cofactor.

It localises to the cytoplasm. It catalyses the reaction tRNA(Phe) + L-phenylalanine + ATP = L-phenylalanyl-tRNA(Phe) + AMP + diphosphate + H(+). This chain is Phenylalanine--tRNA ligase alpha subunit, found in Flavobacterium psychrophilum (strain ATCC 49511 / DSM 21280 / CIP 103535 / JIP02/86).